A 964-amino-acid polypeptide reads, in one-letter code: Protein translocase subunit SecA (964 aa).

Residues Gln-86, Gly-104–Thr-108, and Asp-494 each bind ATP. The segment at Ala-848–Lys-964 is disordered. The span at Ala-871–Thr-882 shows a compositional bias: acidic residues. Low complexity predominate over residues Ala-889–Ser-900. Cys-947, Cys-949, Cys-958, and His-959 together coordinate Zn(2+).

The protein belongs to the SecA family. In terms of assembly, monomer and homodimer. Part of the essential Sec protein translocation apparatus which comprises SecA, SecYEG and auxiliary proteins SecDF. Other proteins may also be involved. The cofactor is Zn(2+).

It localises to the cell membrane. The protein localises to the cytoplasm. It carries out the reaction ATP + H2O + cellular proteinSide 1 = ADP + phosphate + cellular proteinSide 2.. Part of the Sec protein translocase complex. Interacts with the SecYEG preprotein conducting channel. Has a central role in coupling the hydrolysis of ATP to the transfer of proteins into and across the cell membrane, serving as an ATP-driven molecular motor driving the stepwise translocation of polypeptide chains across the membrane. This Bifidobacterium longum (strain NCC 2705) protein is Protein translocase subunit SecA.